Reading from the N-terminus, the 257-residue chain is tRNA uridine(34) hydroxylase (257 aa).

Residues 128-222 (NGRRLVMLDA…YFEQVGGEGY (95 aa)) enclose the Rhodanese domain. Cys182 functions as the Cysteine persulfide intermediate in the catalytic mechanism.

This sequence belongs to the TrhO family.

It catalyses the reaction uridine(34) in tRNA + AH2 + O2 = 5-hydroxyuridine(34) in tRNA + A + H2O. Its function is as follows. Catalyzes oxygen-dependent 5-hydroxyuridine (ho5U) modification at position 34 in tRNAs. This Xylella fastidiosa (strain M23) protein is tRNA uridine(34) hydroxylase.